The following is a 192-amino-acid chain: Ion-translocating oxidoreductase complex subunit A (192 aa).

The next 6 membrane-spanning stretches (helical) occupy residues V5 to L25, I39 to V59, L67 to F87, L102 to L122, I134 to M154, and S171 to V191.

This sequence belongs to the NqrDE/RnfAE family. In terms of assembly, the complex is composed of six subunits: RnfA, RnfB, RnfC, RnfD, RnfE and RnfG.

The protein localises to the cell inner membrane. In terms of biological role, part of a membrane-bound complex that couples electron transfer with translocation of ions across the membrane. This chain is Ion-translocating oxidoreductase complex subunit A, found in Vibrio parahaemolyticus serotype O3:K6 (strain RIMD 2210633).